A 401-amino-acid chain; its full sequence is Type 3 secretion system translocon protein SctE (401 aa).

Residues 129–160 (IQRLHEQNMKKIEENQEKIKETEENAKQVKKS) adopt a coiled-coil conformation. Transmembrane regions (helical) follow at residues 166-186 (IFGW…VASG) and 225-245 (LGPI…VMTF). Positions 345-379 (LALNKADMAALQSIIDRLKEELSHLSESHRQVMEL) form a coiled coil.

It belongs to the SctE/SipB/YopB family. In terms of assembly, the core secretion machinery of the T3SS is composed of approximately 20 different proteins, including cytoplasmic components, a base, an export apparatus and a needle. This subunit is involved in the formation of a pore, called the translocon, in host membrane. Interacts with YopD/SctB. Together with YopD/SctB, forms a multimeric integral membrane complex with a mass of between 500 and 700 kDa.

It localises to the secreted. It is found in the host membrane. In terms of biological role, component of the type III secretion system (T3SS), also called injectisome, which is used to inject bacterial effector proteins into eukaryotic host cells. YopB/SctE and YopD/SctB are inserted into the host membrane where they form a pore and allow the translocation of effector proteins into the cytosol of target cells. Is an essential virulence determinant. Required for YopE translocation. Functionally, essential for the establishment of Yersinia infections in a mouse model system, but not for the targeting of effector Yops. May modulate the host's immune response at a distance from the site of infection. The polypeptide is Type 3 secretion system translocon protein SctE (Yersinia enterocolitica).